The following is a 217-amino-acid chain: Large ribosomal subunit protein uL1 (217 aa).

The protein belongs to the universal ribosomal protein uL1 family. As to quaternary structure, component of the large ribosomal subunit (LSU). Mature N.crassa ribosomes consist of a small (40S) and a large (60S) subunit. The 40S small subunit contains 1 molecule of ribosomal RNA (18S rRNA) and at least 32 different proteins. The large 60S subunit contains 3 rRNA molecules (26S, 5.8S and 5S rRNA) and at least 42 different proteins. uL1 forms part of the L1 stalk.

Its subcellular location is the cytoplasm. Component of the ribosome, a large ribonucleoprotein complex responsible for the synthesis of proteins in the cell. The small ribosomal subunit (SSU) binds messenger RNAs (mRNAs) and translates the encoded message by selecting cognate aminoacyl-transfer RNA (tRNA) molecules. The large subunit (LSU) contains the ribosomal catalytic site termed the peptidyl transferase center (PTC), which catalyzes the formation of peptide bonds, thereby polymerizing the amino acids delivered by tRNAs into a polypeptide chain. The nascent polypeptides leave the ribosome through a tunnel in the LSU and interact with protein factors that function in enzymatic processing, targeting, and the membrane insertion of nascent chains at the exit of the ribosomal tunnel. uL1 forms part of the L1 stalk, a mobile element that plays a role in evacuating the exit-site tRNA. This chain is Large ribosomal subunit protein uL1 (crp-74), found in Neurospora crassa (strain ATCC 24698 / 74-OR23-1A / CBS 708.71 / DSM 1257 / FGSC 987).